The following is a 178-amino-acid chain: Cytochrome b6-f complex iron-sulfur subunit 1 (178 aa).

Residues 17-36 form a helical membrane-spanning segment; sequence LLNFLAGTTVAVTASAGAYA. The region spanning 61–161 is the Rieske domain; sequence GNPIPASQIL…VAVVDDQIFI (101 aa). 4 residues coordinate [2Fe-2S] cluster: cysteine 107, histidine 109, cysteine 125, and histidine 128. The cysteines at positions 112 and 127 are disulfide-linked.

The protein belongs to the Rieske iron-sulfur protein family. In terms of assembly, the 4 large subunits of the cytochrome b6-f complex are cytochrome b6, subunit IV (17 kDa polypeptide, PetD), cytochrome f and the Rieske protein, while the 4 small subunits are PetG, PetL, PetM and PetN. The complex functions as a dimer. [2Fe-2S] cluster is required as a cofactor.

The protein localises to the cellular thylakoid membrane. It carries out the reaction 2 oxidized [plastocyanin] + a plastoquinol + 2 H(+)(in) = 2 reduced [plastocyanin] + a plastoquinone + 4 H(+)(out). In terms of biological role, component of the cytochrome b6-f complex, which mediates electron transfer between photosystem II (PSII) and photosystem I (PSI), cyclic electron flow around PSI, and state transitions. This Synechocystis sp. (strain ATCC 27184 / PCC 6803 / Kazusa) protein is Cytochrome b6-f complex iron-sulfur subunit 1.